The chain runs to 76 residues: Sulfur carrier protein TusA (76 aa).

Residue Cys-14 is the Cysteine persulfide intermediate of the active site.

It belongs to the sulfur carrier protein TusA family. In terms of assembly, interacts with IscS.

Its subcellular location is the cytoplasm. It functions in the pathway tRNA modification. Functionally, sulfur carrier protein involved in sulfur trafficking in the cell. Part of a sulfur-relay system required for 2-thiolation during synthesis of 2-thiouridine of the modified wobble base 5-methylaminomethyl-2-thiouridine (mnm(5)s(2)U) in tRNA. Interacts with IscS and stimulates its cysteine desulfurase activity. Accepts an activated sulfur from IscS, which is then transferred to TusD, and thus determines the direction of sulfur flow from IscS to 2-thiouridine formation. Also appears to be involved in sulfur transfer for the biosynthesis of molybdopterin. The protein is Sulfur carrier protein TusA of Buchnera aphidicola subsp. Acyrthosiphon pisum (strain Tuc7).